Reading from the N-terminus, the 258-residue chain is tRNA pseudouridine synthase A (258 aa).

Asp-53 serves as the catalytic Nucleophile. Tyr-111 is a binding site for substrate.

It belongs to the tRNA pseudouridine synthase TruA family. Homodimer.

It carries out the reaction uridine(38/39/40) in tRNA = pseudouridine(38/39/40) in tRNA. Formation of pseudouridine at positions 38, 39 and 40 in the anticodon stem and loop of transfer RNAs. In Streptococcus agalactiae serotype III (strain NEM316), this protein is tRNA pseudouridine synthase A.